A 225-amino-acid chain; its full sequence is Enolase-phosphatase E1 (225 aa).

The protein belongs to the HAD-like hydrolase superfamily. MasA/MtnC family. Monomer. It depends on Mg(2+) as a cofactor.

The catalysed reaction is 5-methylsulfanyl-2,3-dioxopentyl phosphate + H2O = 1,2-dihydroxy-5-(methylsulfanyl)pent-1-en-3-one + phosphate. It participates in amino-acid biosynthesis; L-methionine biosynthesis via salvage pathway; L-methionine from S-methyl-5-thio-alpha-D-ribose 1-phosphate: step 3/6. It functions in the pathway amino-acid biosynthesis; L-methionine biosynthesis via salvage pathway; L-methionine from S-methyl-5-thio-alpha-D-ribose 1-phosphate: step 4/6. In terms of biological role, bifunctional enzyme that catalyzes the enolization of 2,3-diketo-5-methylthiopentyl-1-phosphate (DK-MTP-1-P) into the intermediate 2-hydroxy-3-keto-5-methylthiopentenyl-1-phosphate (HK-MTPenyl-1-P), which is then dephosphorylated to form the acireductone 1,2-dihydroxy-3-keto-5-methylthiopentene (DHK-MTPene). The chain is Enolase-phosphatase E1 from Pseudomonas aeruginosa (strain UCBPP-PA14).